The primary structure comprises 215 residues: Protein-methionine-sulfoxide reductase heme-binding subunit MsrQ (215 aa).

A run of 6 helical transmembrane segments spans residues 17 to 37, 50 to 70, 85 to 105, 121 to 141, 152 to 172, and 177 to 197; these read AAIWSLYVIGLCPGLWYFYLA, FEHLLGIWALRFLCLGLLVTP, ALGLIAFYYVLAHFTVYLVLD, PYIMLGMAGLIILIPLALTSN, WNTLHKLVYLVLIVGVLHFVL, and ITLEPVFYISTMVVLLGYRLV.

It belongs to the MsrQ family. As to quaternary structure, heterodimer of a catalytic subunit (MsrP) and a heme-binding subunit (MsrQ). FMN serves as cofactor. It depends on heme b as a cofactor.

The protein localises to the cell inner membrane. In terms of biological role, part of the MsrPQ system that repairs oxidized periplasmic proteins containing methionine sulfoxide residues (Met-O), using respiratory chain electrons. Thus protects these proteins from oxidative-stress damage caused by reactive species of oxygen and chlorine generated by the host defense mechanisms. MsrPQ is essential for the maintenance of envelope integrity under bleach stress, rescuing a wide series of structurally unrelated periplasmic proteins from methionine oxidation. MsrQ provides electrons for reduction to the reductase catalytic subunit MsrP, using the quinone pool of the respiratory chain. The chain is Protein-methionine-sulfoxide reductase heme-binding subunit MsrQ from Agrobacterium fabrum (strain C58 / ATCC 33970) (Agrobacterium tumefaciens (strain C58)).